Consider the following 382-residue polypeptide: Anhydro-N-acetylmuramic acid kinase (382 aa).

ATP is bound at residue 9-16; the sequence is GTSLDGID.

This sequence belongs to the anhydro-N-acetylmuramic acid kinase family.

It carries out the reaction 1,6-anhydro-N-acetyl-beta-muramate + ATP + H2O = N-acetyl-D-muramate 6-phosphate + ADP + H(+). It functions in the pathway amino-sugar metabolism; 1,6-anhydro-N-acetylmuramate degradation. Its pathway is cell wall biogenesis; peptidoglycan recycling. In terms of biological role, catalyzes the specific phosphorylation of 1,6-anhydro-N-acetylmuramic acid (anhMurNAc) with the simultaneous cleavage of the 1,6-anhydro ring, generating MurNAc-6-P. Is required for the utilization of anhMurNAc either imported from the medium or derived from its own cell wall murein, and thus plays a role in cell wall recycling. The sequence is that of Anhydro-N-acetylmuramic acid kinase from Bacillus cereus (strain 03BB102).